The sequence spans 542 residues: Phosphoglucomutase (542 aa).

Substrate contacts are provided by residues Thr-17, Arg-21, Ser-112–His-113, and Lys-125. Residue Ser-112 is the Phosphoserine intermediate of the active site. Ser-112 is a Mg(2+) binding site. Residues Asp-276, Asp-278, and Asp-280 each coordinate Mg(2+). Residues Asp-280–Arg-281, Thr-343, Glu-362–Ser-364, Lys-375, and Arg-495 each bind substrate.

The protein belongs to the phosphohexose mutase family. Mg(2+) is required as a cofactor.

The enzyme catalyses alpha-D-glucose 1-phosphate = alpha-D-glucose 6-phosphate. This enzyme participates in both the breakdown and synthesis of glucose. Required for the synthesis of capsular polysaccharide and normal lipopolysaccharide. This is Phosphoglucomutase (pgm) from Rhizobium radiobacter (Agrobacterium tumefaciens).